We begin with the raw amino-acid sequence, 418 residues long: L-methionine/branched-chain amino acid exporter YjeH (418 aa).

The Periplasmic portion of the chain corresponds to 1–15; the sequence is MSGLKQELGLAQGIG. Residues 16 to 36 form a helical membrane-spanning segment; it reads LLSTSLLGTGVFAVPALAALV. The Cytoplasmic portion of the chain corresponds to 37 to 41; sequence AGNNS. The helical transmembrane segment at 42 to 62 threads the bilayer; that stretch reads LWAWPVLIILVFPIAIVFAIL. The Periplasmic portion of the chain corresponds to 63–89; sequence GRHYPSAGGVAHFVGMAFGSRLERVTG. The helical transmembrane segment at 90-110 threads the bilayer; it reads WLFLSVIPVGLPAALQIAAGF. Residues 111–113 are Cytoplasmic-facing; that stretch reads GQA. The chain crosses the membrane as a helical span at residues 114-134; sequence MFGWHSWQLLLAELGTLALVW. At 135-147 the chain is on the periplasmic side; that stretch reads YIGTRGASSSANL. Residues 148-168 traverse the membrane as a helical segment; sequence QTVIAGLIVALIVAIWWAGDI. Over 169–182 the chain is Cytoplasmic; the sequence is KPANIPFPAPGNIE. Residues 183 to 203 traverse the membrane as a helical segment; it reads LTGLFAALSVMFWCFVGLEAF. Over 204-219 the chain is Periplasmic; it reads AHLASEFKNPERDFPR. A helical transmembrane segment spans residues 220-240; that stretch reads ALMIGLLLAGLVYWGCTVVVL. Over 241 to 257 the chain is Cytoplasmic; it reads HFDAYGEKMAAAASLPK. A helical membrane pass occupies residues 258-278; sequence IVVQLFGVGALWIACVIGYLA. Topologically, residues 279–317 are periplasmic; that stretch reads CFASLNIYIQSFARLVWSQAQHNPDHYLARLSSRHIPNN. A helical membrane pass occupies residues 318–338; it reads ALNAVLGCCVVSTLVIHALEI. The Cytoplasmic segment spans residues 339–341; the sequence is NLD. The helical transmembrane segment at 342 to 362 threads the bilayer; sequence ALIIYANGIFIMIYLLCMLAG. The Periplasmic segment spans residues 363–378; that stretch reads CKLLQGRYRLLAVVGG. Residues 379-399 traverse the membrane as a helical segment; that stretch reads LLCVLLLAMVGWKSLYALIML. Over 400 to 418 the chain is Cytoplasmic; sequence AGLWLLLPKRKTPENGITT.

This sequence belongs to the amino acid-polyamine-organocation (APC) superfamily. Amino acid efflux (AAE) (TC 2.A.3.13) family.

The protein resides in the cell inner membrane. The catalysed reaction is L-methionine(in) + H(+)(out) = L-methionine(out) + H(+)(in). The enzyme catalyses L-leucine(in) + H(+)(out) = L-leucine(out) + H(+)(in). It carries out the reaction L-isoleucine(in) + H(+)(out) = L-isoleucine(out) + H(+)(in). It catalyses the reaction L-valine(in) + H(+)(out) = L-valine(out) + H(+)(in). Its activity is regulated as follows. Efflux of L-methionine is inhibited by the proton ionophore carbonyl cyanide m-chlorophenylhydrazone (CCCP). Its function is as follows. Catalyzes the efflux of L-methionine, L-leucine, L-isoleucine and L-valine. Activity is dependent on electrochemical potential. This chain is L-methionine/branched-chain amino acid exporter YjeH (yjeH), found in Escherichia coli (strain K12).